Reading from the N-terminus, the 301-residue chain is Mitochondrial substrate carrier family protein X (301 aa).

The Mitochondrial intermembrane segment spans residues methionine 1 to asparagine 23. Solcar repeat units follow at residues proline 18–arginine 109, isoleucine 117–asparagine 199, and isoleucine 208–phenylalanine 296. A helical membrane pass occupies residues leucine 24–valine 44. Topologically, residues lysine 45 to glutamate 75 are mitochondrial matrix. A helical transmembrane segment spans residues glycine 76–alanine 97. Residues leucine 98–glutamate 122 are Mitochondrial intermembrane-facing. The helical transmembrane segment at valine 123–valine 143 threads the bilayer. Topologically, residues lysine 144–lysine 173 are mitochondrial matrix. Residues glycine 174–glycine 194 traverse the membrane as a helical segment. Topologically, residues arginine 195–glutamate 207 are mitochondrial intermembrane. A helical membrane pass occupies residues isoleucine 208–serine 228. Residues threonine 229–glycine 271 are Mitochondrial matrix-facing. A helical membrane pass occupies residues valine 272–isoleucine 292. Topologically, residues glutamine 293–histidine 301 are mitochondrial intermembrane.

It belongs to the mitochondrial carrier (TC 2.A.29) family.

It is found in the mitochondrion inner membrane. Mitochondrial solute carriers shuttle metabolites, nucleotides, and cofactors through the mitochondrial inner membrane. The polypeptide is Mitochondrial substrate carrier family protein X (mcfX) (Dictyostelium discoideum (Social amoeba)).